Reading from the N-terminus, the 128-residue chain is uncharacterized protein (128 aa).

2 helical membrane passes run 52–72 (LLVI…GIFL) and 91–111 (LFVA…VMLI).

The protein resides in the cell membrane. This is an uncharacterized protein from Mycoplasma pneumoniae (strain ATCC 29342 / M129 / Subtype 1) (Mycoplasmoides pneumoniae).